Consider the following 433-residue polypeptide: T-box transcription factor T (433 aa).

The segment at residues 49–217 is a DNA-binding region (T-box); sequence LWLRFKELTN…YNPFAKAFLD (169 aa).

Monomer. Binds DNA as a monomer.

Its subcellular location is the nucleus. Involved in the transcriptional regulation of genes required for mesoderm formation and differentiation. Binds to a palindromic site (called T site) and activates gene transcription when bound to such a site. In Gallus gallus (Chicken), this protein is T-box transcription factor T.